The following is a 284-amino-acid chain: 2,3,4,5-tetrahydropyridine-2,6-dicarboxylate N-succinyltransferase (284 aa).

Substrate-binding residues include Arg-111 and Asp-148.

The protein belongs to the transferase hexapeptide repeat family. Homotrimer.

The protein localises to the cytoplasm. The catalysed reaction is (S)-2,3,4,5-tetrahydrodipicolinate + succinyl-CoA + H2O = (S)-2-succinylamino-6-oxoheptanedioate + CoA. The protein operates within amino-acid biosynthesis; L-lysine biosynthesis via DAP pathway; LL-2,6-diaminopimelate from (S)-tetrahydrodipicolinate (succinylase route): step 1/3. This is 2,3,4,5-tetrahydropyridine-2,6-dicarboxylate N-succinyltransferase from Chelativorans sp. (strain BNC1).